The following is a 450-amino-acid chain: Beclin-1 (450 aa).

Residue methionine 1 is modified to N-acetylmethionine. Phosphoserine is present on residues serine 15 and serine 30. Residues 48 to 72 (TTAQAKPGETQEEETNSGEEPFIET) are disordered. 3 positions are modified to phosphoserine; by AMPK: serine 90, serine 93, and serine 96. Positions 108–127 (TMENLSRRLKVTGDLFDIMS) match the BH3 motif. The segment at 112-159 (LSRRLKVTGDLFDIMSGQTDVDHPLCEECTDTLLDQLDTQLNVTENEC) is interaction with BCL2 and BCL2L1 isoform Bcl-X(L). Phosphothreonine; by DAPK1 is present on threonine 119. Positions 142 to 270 (DTLLDQLDTQ…LDKLKKTNVF (129 aa)) form a coiled coil. An evolutionary conserved domain (ECD) region spans residues 245–450 (DELKSVENQM…AWVSSQFYNK (206 aa)). Residues lysine 402 and lysine 437 each participate in a glycyl lysine isopeptide (Lys-Gly) (interchain with G-Cter in ubiquitin) cross-link. A required for membrane-association region spans residues 425-450 (WTKALKFMLTNLKWGLAWVSSQFYNK).

The protein belongs to the beclin family. In terms of assembly, a homodimeric form is proposed to exist; this metastable form readily transits to ATG14- or UVRAG-containing complexes with BECN1:UVRAG being more stable than BECN1:ATG14. Component of the PI3K (PI3KC3/PI3K-III/class III phosphatidylinositol 3-kinase) complex the core of which is composed of the catalytic subunit PIK3C3, the regulatory subunit PIK3R4 and BECN1 associating with additional regulatory/auxiliary subunits to form alternative complex forms. Alternative complex forms containing a fourth regulatory subunit in a mutually exclusive manner are PI3K complex I (PI3KC3-C1) containing ATG14, and PI3K complex II (PI3KC3-C2) containing UVRAG. PI3KC3-C1 displays a V-shaped architecture with PIK3R4 serving as a bridge between PIK3C3 and the ATG14:BECN1 subcomplex. Both, PI3KC3-C1 and PI3KC3-C2, can associate with further regulatory subunits, such as RUBCN, SH3GLB1/Bif-1 and AMBRA1. PI3KC3-C1 probably associates with PIK3CB. Forms a complex with PPP2CA and AMBRA1; AMBRA1 and BECN1 components of the complex regulate MYC stability via different pathways. Component of the complex, at least composed of LRPPRC, BECN1 and BCL2; the interactions prevent BECN1 from forming an autophagy-inducing complex with PIK3C3. Interacts with AMBRA1, GOPC, GRID2. Interacts with BCL2 and BCL2L1 isoform Bcl-X(L); the interaction inhibits BECN1 function in promoting autophagy by interfering with the formation of the PI3K complex. Interacts with cytosolic HMGB1; inhibits the interaction of BECN1 and BCL2 leading to promotion of autophagy. Interacts with USP10, USP13, VMP1, DAPK1, RAB39A. Interacts with the poly-Gln domain of ATXN3; the interaction causes deubiquitination at Lys-402 and stabilizes BECN1. Interacts with SLAMF1. Interacts with TRIM5; the interaction causes activation of BECN1 by causing its dissociation from its inhibitors BCL2 and TAB2. Interacts with active ULK1 (phosphorylated on 'Ser-317') and MEFV simultaneously. Interacts with WDR81 and WDR91; negatively regulates the PI3 kinase/PI3K activity associated with endosomal membranes. Interacts with LAPTM4B; competes with EGFR for LAPTM4B binding; regulates EGFR activity. Interacts with TRIM50. Interacts with TRIM16. Interacts with ATG14; this interaction is increased in the absence of TMEM39A. Interacts with WASHC1; preventing interaction with AMBRA1 and the DCX(AMBRA1) complex and subsequent ubiquitination. Interacts with TRIM17. Interacts with BCL2L10/BCL-B (via BH1 domain). Interacts with SH3BGRL. Interacts with IRGM; enhancing BECN1-interacting partners and influencing the composition of the BECN1 complex. Interacts with ARMC3. Interacts with LRPPRC. As to quaternary structure, (Microbial infection) Interacts with human cytomegalovirus/HHV-5 protein TRS1. (Microbial infection) Interacts with murine gammaherpesvirus 68 M11. In terms of assembly, (Microbial infection) Interacts with herpes simplex virus 1 (HHV-1) protein ICP34.5; this interaction antagonizes the host autophagy response. As to quaternary structure, (Microbial infection) Interacts with Epstein-Barr virus protein BHRF1; this interaction inhibits BECN1-mediated autophagy induction. Phosphorylation at Thr-119 by DAPK1 reduces its interaction with BCL2 and BCL2L1 and promotes induction of autophagy. In response to autophagic stimuli, phosphorylated at serine residues by AMPK in an ATG14-dependent manner, and this phosphorylation is critical for maximally efficient autophagy. Post-translationally, polyubiquitinated by NEDD4, both with 'Lys-11'- and 'Lys-63'-linkages. 'Lys-11'-linked polyubiquitination leads to degradation and is enhanced when the stabilizing interaction partner VPS34 is depleted. Deubiquitinated by USP10 and USP13, leading to stabilize the PIK3C3/VPS34-containing complexes. Polyubiquitinated at Lys-402 with 'Lys-48'-linkages. 'Lys-48'-linked polyubiquitination of Lys-402 leads to degradation. Deubiquitinated by ATXN3, leading to stabilization. Ubiquitinated at Lys-437 via 'Lys-63'-linkage by the DCX(AMBRA1) complex, thereby increasing the association between BECN1 and PIK3C3 to promote PIK3C3 activity. 'Lys-48'-linked ubiquitination by RNF216 leads to proteasomal degradation and autophagy inhibition. In terms of processing, proteolytically processed by caspases including CASP8 and CASP3; the C-terminal fragments lack autophagy-inducing capacity and are proposed to induce apoptosis. Thus the cleavage is proposed to be an determinant to switch from autophagy to apoptosis pathways affecting cellular homeostasis including viral infections and survival of tumor cells. As to expression, ubiquitous.

The protein resides in the cytoplasm. Its subcellular location is the golgi apparatus. The protein localises to the trans-Golgi network membrane. It is found in the endosome membrane. It localises to the endoplasmic reticulum membrane. The protein resides in the mitochondrion membrane. Its subcellular location is the endosome. The protein localises to the cytoplasmic vesicle. It is found in the autophagosome. It localises to the mitochondrion. The protein resides in the nucleus. In terms of biological role, plays a central role in autophagy. Acts as a core subunit of the PI3K complex that mediates formation of phosphatidylinositol 3-phosphate; different complex forms are believed to play a role in multiple membrane trafficking pathways: PI3KC3-C1 is involved in initiation of autophagosomes and PI3KC3-C2 in maturation of autophagosomes and endocytosis. Involved in regulation of degradative endocytic trafficking and required for the abscission step in cytokinesis, probably in the context of PI3KC3-C2. Essential for the formation of PI3KC3-C2 but not PI3KC3-C1 PI3K complex forms. Involved in endocytosis. May play a role in antiviral host defense. Functionally, beclin-1-C 35 kDa localized to mitochondria can promote apoptosis; it induces the mitochondrial translocation of BAX and the release of proapoptotic factors. Its function is as follows. (Microbial infection) Protects against infection by a neurovirulent strain of Sindbis virus. The chain is Beclin-1 (BECN1) from Homo sapiens (Human).